We begin with the raw amino-acid sequence, 367 residues long: tRNA 2-selenouridine synthase (367 aa).

The 124-residue stretch at 14-137 (FLNDVPLMDV…LRRFLIDSLE (124 aa)) folds into the Rhodanese domain. Cys97 functions as the S-selanylcysteine intermediate in the catalytic mechanism.

The protein belongs to the SelU family. As to quaternary structure, monomer.

The catalysed reaction is 5-methylaminomethyl-2-thiouridine(34) in tRNA + selenophosphate + (2E)-geranyl diphosphate + H2O + H(+) = 5-methylaminomethyl-2-selenouridine(34) in tRNA + (2E)-thiogeraniol + phosphate + diphosphate. The enzyme catalyses 5-methylaminomethyl-2-thiouridine(34) in tRNA + (2E)-geranyl diphosphate = 5-methylaminomethyl-S-(2E)-geranyl-thiouridine(34) in tRNA + diphosphate. It catalyses the reaction 5-methylaminomethyl-S-(2E)-geranyl-thiouridine(34) in tRNA + selenophosphate + H(+) = 5-methylaminomethyl-2-(Se-phospho)selenouridine(34) in tRNA + (2E)-thiogeraniol. It carries out the reaction 5-methylaminomethyl-2-(Se-phospho)selenouridine(34) in tRNA + H2O = 5-methylaminomethyl-2-selenouridine(34) in tRNA + phosphate. In terms of biological role, involved in the post-transcriptional modification of the uridine at the wobble position (U34) of tRNA(Lys), tRNA(Glu) and tRNA(Gln). Catalyzes the conversion of 2-thiouridine (S2U-RNA) to 2-selenouridine (Se2U-RNA). Acts in a two-step process involving geranylation of 2-thiouridine (S2U) to S-geranyl-2-thiouridine (geS2U) and subsequent selenation of the latter derivative to 2-selenouridine (Se2U) in the tRNA chain. The protein is tRNA 2-selenouridine synthase of Marinobacter nauticus (strain ATCC 700491 / DSM 11845 / VT8) (Marinobacter aquaeolei).